The following is a 111-amino-acid chain: Stress-response A/B barrel domain-containing protein At5g22580 (111 aa).

In terms of domain architecture, Stress-response A/B barrel spans 6-98 (FKHLVVVKFK…VIDKIVLLDF (93 aa)). Mg(2+) contacts are provided by Val-31, Ile-34, Asp-35, and Val-37.

Homodimer. Mg(2+) serves as cofactor.

In terms of biological role, involved in stress response. This is Stress-response A/B barrel domain-containing protein At5g22580 from Arabidopsis thaliana (Mouse-ear cress).